A 292-amino-acid chain; its full sequence is MSQDVNELSKQPTPDKAEDNAFFPSPYSLSQYTAPKTDFDGVEHKGAYKDGKWKVLMIAAEERYVLLENGKMFSTGNHPVEMLLPLHHLMEAGFDVDVATLSGYPAKLELWAMPTEDEAVITTYNKLKEKLKQPKKLADVIKNELGPDSDYLSVFIPGGHAAVVGISESEDVQKTLDWALENDRFIVTLCHGPAALLSAGLNREKSPLEGYSVCVFPDSLDEGANIEIGYLPGRLKWLVAELLTKQGLKVVNDDMTGRTLKDRKLLTGDSPLASNELGKLAVNEMLNAIQNK.

A compositionally biased stretch (polar residues) spans 1–12 (MSQDVNELSKQP). The interval 1 to 23 (MSQDVNELSKQPTPDKAEDNAFF) is disordered. The Nucleophile role is filled by C190.

This sequence belongs to the peptidase C56 family. HchA subfamily.

The protein localises to the cytoplasm. The enzyme catalyses N(omega)-(1-hydroxy-2-oxopropyl)-L-arginyl-[protein] + H2O = lactate + L-arginyl-[protein] + H(+). It catalyses the reaction N(6)-(1-hydroxy-2-oxopropyl)-L-lysyl-[protein] + H2O = lactate + L-lysyl-[protein] + H(+). The catalysed reaction is S-(1-hydroxy-2-oxopropyl)-L-cysteinyl-[protein] + H2O = lactate + L-cysteinyl-[protein] + H(+). It carries out the reaction N(omega)-(1-hydroxy-2-oxoethyl)-L-arginyl-[protein] + H2O = L-arginyl-[protein] + glycolate + H(+). The enzyme catalyses N(6)-(1-hydroxy-2-oxoethyl)-L-lysyl-[protein] + H2O = glycolate + L-lysyl-[protein] + H(+). It catalyses the reaction S-(1-hydroxy-2-oxoethyl)-L-cysteinyl-[protein] + H2O = glycolate + L-cysteinyl-[protein] + H(+). The catalysed reaction is N(2)-(1-hydroxy-2-oxopropyl)-dGTP + H2O = lactate + dGTP + H(+). It carries out the reaction N(2)-(1-hydroxy-2-oxopropyl)-GTP + H2O = lactate + GTP + H(+). The enzyme catalyses N(2)-(1-hydroxy-2-oxopropyl)-GDP + H2O = lactate + GDP + H(+). It catalyses the reaction N(2)-(1-hydroxy-2-oxopropyl)-GMP + H2O = lactate + GMP + H(+). The catalysed reaction is N(2)-(1-hydroxy-2-oxoethyl)-dGTP + H2O = dGTP + glycolate + H(+). It carries out the reaction N(2)-(1-hydroxy-2-oxoethyl)-GTP + H2O = glycolate + GTP + H(+). The enzyme catalyses N(2)-(1-hydroxy-2-oxoethyl)-GDP + H2O = glycolate + GDP + H(+). It catalyses the reaction N(2)-(1-hydroxy-2-oxoethyl)-GMP + H2O = glycolate + GMP + H(+). The catalysed reaction is an N(2)-(1-hydroxy-2-oxopropyl)-guanosine in RNA + H2O = a guanosine in RNA + lactate + H(+). It carries out the reaction an N(2)-(1-hydroxy-2-oxopropyl)-2'-deoxyguanosine in DNA + H2O = a 2'-deoxyguanosine in DNA + lactate + H(+). The enzyme catalyses an N(2)-(1-hydroxy-2-oxoethyl)-guanosine in RNA + H2O = a guanosine in RNA + glycolate + H(+). It catalyses the reaction an N(2)-(1-hydroxy-2-oxoethyl)-2'-deoxyguanosine in DNA + H2O = a 2'-deoxyguanosine in DNA + glycolate + H(+). Its function is as follows. Protein and nucleotide deglycase that catalyzes the deglycation of the Maillard adducts formed between amino groups of proteins or nucleotides and reactive carbonyl groups of glyoxals. Thus, functions as a protein deglycase that repairs methylglyoxal- and glyoxal-glycated proteins, and releases repaired proteins and lactate or glycolate, respectively. Deglycates cysteine, arginine and lysine residues in proteins, and thus reactivates these proteins by reversing glycation by glyoxals. Acts on early glycation intermediates (hemithioacetals and aminocarbinols), preventing the formation of Schiff bases and advanced glycation endproducts (AGE). Also functions as a nucleotide deglycase able to repair glycated guanine in the free nucleotide pool (GTP, GDP, GMP, dGTP) and in DNA and RNA. Is thus involved in a major nucleotide repair system named guanine glycation repair (GG repair), dedicated to reversing methylglyoxal and glyoxal damage via nucleotide sanitization and direct nucleic acid repair. Plays an important role in protecting cells from carbonyl stress. This Staphylococcus aureus (strain bovine RF122 / ET3-1) protein is Protein/nucleic acid deglycase HchA.